A 606-amino-acid polypeptide reads, in one-letter code: UvrABC system protein C (606 aa).

In terms of domain architecture, GIY-YIG spans 14–93; the sequence is QNPGVYLMKD…IKKHSPRYNV (80 aa). The 36-residue stretch at 203 to 238 folds into the UVR domain; sequence PDLINRLKFEMQTEADLEHFERAAQIRDTILAIQTT.

The protein belongs to the UvrC family. As to quaternary structure, interacts with UvrB in an incision complex.

Its subcellular location is the cytoplasm. Its function is as follows. The UvrABC repair system catalyzes the recognition and processing of DNA lesions. UvrC both incises the 5' and 3' sides of the lesion. The N-terminal half is responsible for the 3' incision and the C-terminal half is responsible for the 5' incision. This chain is UvrABC system protein C, found in Desulforapulum autotrophicum (strain ATCC 43914 / DSM 3382 / VKM B-1955 / HRM2) (Desulfobacterium autotrophicum).